A 139-amino-acid chain; its full sequence is NADPH-dependent 7-cyano-7-deazaguanine reductase (139 aa).

C34 acts as the Thioimide intermediate in catalysis. Residue D41 is the Proton donor of the active site. Residues 56 to 58 (IEL) and 75 to 76 (HE) contribute to the substrate site.

It belongs to the GTP cyclohydrolase I family. QueF type 1 subfamily.

It is found in the cytoplasm. The enzyme catalyses 7-aminomethyl-7-carbaguanine + 2 NADP(+) = 7-cyano-7-deazaguanine + 2 NADPH + 3 H(+). It participates in tRNA modification; tRNA-queuosine biosynthesis. Functionally, catalyzes the NADPH-dependent reduction of 7-cyano-7-deazaguanine (preQ0) to 7-aminomethyl-7-deazaguanine (preQ1). This Nitrosomonas eutropha (strain DSM 101675 / C91 / Nm57) protein is NADPH-dependent 7-cyano-7-deazaguanine reductase.